Here is a 442-residue protein sequence, read N- to C-terminus: tRNA-2-methylthio-N(6)-dimethylallyladenosine synthase (442 aa).

An MTTase N-terminal domain is found at 2 to 120 (KKVFIRTFGC…LPKMIVDKET (119 aa)). Residues cysteine 11, cysteine 49, cysteine 83, cysteine 157, cysteine 161, and cysteine 164 each contribute to the [4Fe-4S] cluster site. Residues 143-375 (RVEGGAAFVS…NEVIEAETAR (233 aa)) enclose the Radical SAM core domain. In terms of domain architecture, TRAM spans 378–441 (QTMIGTVQRC…TFSLRGKVVE (64 aa)).

This sequence belongs to the methylthiotransferase family. MiaB subfamily. Monomer. Requires [4Fe-4S] cluster as cofactor.

It is found in the cytoplasm. It carries out the reaction N(6)-dimethylallyladenosine(37) in tRNA + (sulfur carrier)-SH + AH2 + 2 S-adenosyl-L-methionine = 2-methylsulfanyl-N(6)-dimethylallyladenosine(37) in tRNA + (sulfur carrier)-H + 5'-deoxyadenosine + L-methionine + A + S-adenosyl-L-homocysteine + 2 H(+). In terms of biological role, catalyzes the methylthiolation of N6-(dimethylallyl)adenosine (i(6)A), leading to the formation of 2-methylthio-N6-(dimethylallyl)adenosine (ms(2)i(6)A) at position 37 in tRNAs that read codons beginning with uridine. The chain is tRNA-2-methylthio-N(6)-dimethylallyladenosine synthase from Neisseria meningitidis serogroup C / serotype 2a (strain ATCC 700532 / DSM 15464 / FAM18).